The primary structure comprises 438 residues: Glutamyl-tRNA(Gln) amidotransferase subunit D (438 aa).

The Asparaginase/glutaminase domain maps to 92–422 (PDVTIIGTGG…EEVRRMMLTN (331 aa)). Active-site residues include threonine 102, threonine 178, aspartate 179, and lysine 256.

This sequence belongs to the asparaginase 1 family. GatD subfamily. As to quaternary structure, heterodimer of GatD and GatE.

The catalysed reaction is L-glutamyl-tRNA(Gln) + L-glutamine + ATP + H2O = L-glutaminyl-tRNA(Gln) + L-glutamate + ADP + phosphate + H(+). Functionally, allows the formation of correctly charged Gln-tRNA(Gln) through the transamidation of misacylated Glu-tRNA(Gln) in organisms which lack glutaminyl-tRNA synthetase. The reaction takes place in the presence of glutamine and ATP through an activated gamma-phospho-Glu-tRNA(Gln). The GatDE system is specific for glutamate and does not act on aspartate. The sequence is that of Glutamyl-tRNA(Gln) amidotransferase subunit D from Pyrococcus horikoshii (strain ATCC 700860 / DSM 12428 / JCM 9974 / NBRC 100139 / OT-3).